A 297-amino-acid polypeptide reads, in one-letter code: Acetylglutamate kinase (297 aa).

Residues 64–65, Arg86, and Asn190 contribute to the substrate site; that span reads GG.

Belongs to the acetylglutamate kinase family. ArgB subfamily.

Its subcellular location is the cytoplasm. It carries out the reaction N-acetyl-L-glutamate + ATP = N-acetyl-L-glutamyl 5-phosphate + ADP. It participates in amino-acid biosynthesis; L-arginine biosynthesis; N(2)-acetyl-L-ornithine from L-glutamate: step 2/4. Catalyzes the ATP-dependent phosphorylation of N-acetyl-L-glutamate. This Solidesulfovibrio magneticus (strain ATCC 700980 / DSM 13731 / RS-1) (Desulfovibrio magneticus) protein is Acetylglutamate kinase.